The chain runs to 881 residues: Serine/threonine-protein phosphatase 6 regulatory subunit 1 (881 aa).

Positions 10–403 (SSHLDTLLER…VFNNFLHAQV (394 aa)) are interaction with PPP6C. Position 232 is a phosphoserine (Ser232). Thr524 carries the phosphothreonine modification. Residues Ser529, Ser530, Ser531, Ser635, and Ser638 each carry the phosphoserine modification. 2 stretches are compositionally biased toward acidic residues: residues 621–642 (DDDE…DGED) and 669–686 (DSED…DEEG). The disordered stretch occupies residues 621-881 (DDDEEEEDEE…PEGPASPGSQ (261 aa)). Over residues 700–710 (YPSPGPQPPGP) the composition is skewed to pro residues. Ser702, Ser726, and Ser759 each carry phosphoserine. Over residues 814–830 (APSSSDSATRDPSTSVP) the composition is skewed to polar residues. Ser846 bears the Phosphoserine mark.

It belongs to the SAPS family. In terms of assembly, protein phosphatase 6 (PP6) holoenzyme is proposed to be a heterotrimeric complex formed of the catalytic subunit, a SAPS domain-containing subunit (PP6R) and an ankyrin repeat-domain containing regulatory subunit (ARS). Interacts with PPP6C and NFKBIE. Interacts with ANKRD28, ANKRD44 and ANKRD52. As to expression, ubiquitous with higher expression in testis.

The protein resides in the cytoplasm. Functionally, regulatory subunit of protein phosphatase 6 (PP6). May function as a scaffolding PP6 subunit. Involved in the PP6-mediated dephosphorylation of NFKBIE opposing its degradation in response to TNF-alpha. The polypeptide is Serine/threonine-protein phosphatase 6 regulatory subunit 1 (PPP6R1) (Homo sapiens (Human)).